A 357-amino-acid chain; its full sequence is Ribosomal RNA small subunit methyltransferase C (357 aa).

The protein belongs to the methyltransferase superfamily. RsmC family. Monomer.

It localises to the cytoplasm. It carries out the reaction guanosine(1207) in 16S rRNA + S-adenosyl-L-methionine = N(2)-methylguanosine(1207) in 16S rRNA + S-adenosyl-L-homocysteine + H(+). Specifically methylates the guanine in position 1207 of 16S rRNA in the 30S particle. This is Ribosomal RNA small subunit methyltransferase C from Colwellia psychrerythraea (strain 34H / ATCC BAA-681) (Vibrio psychroerythus).